The sequence spans 89 residues: Class I hydrophobin C (89 aa).

An N-terminal signal peptide occupies residues 1–16; that stretch reads MKFSLATIALAAAVAA. Cystine bridges form between Cys-28/Cys-68, Cys-39/Cys-60, Cys-40/Cys-52, and Cys-69/Cys-85. N-linked (GlcNAc...) asparagine glycosylation occurs at Asn-36.

This sequence belongs to the fungal hydrophobin family.

It is found in the secreted. The protein resides in the cell wall. The protein localises to the vacuole. Its subcellular location is the cytoplasmic vesicle. Aerial growth, conidiation, and dispersal of filamentous fungi in the environment rely upon a capability of their secreting small amphipathic proteins called hydrophobins (HPBs) with low sequence identity. Class I can self-assemble into an outermost layer of rodlet bundles on aerial cell surfaces, conferring cellular hydrophobicity that supports fungal growth, development and dispersal; whereas Class II form highly ordered films at water-air interfaces through intermolecular interactions but contribute nothing to the rodlet structure. Hyd1C contributes to certain cell wall-related features, such as hydrophobicity but is not involved in cell wall-related events during fungal proliferation in host hemocoel. Does not contribute to conidial hydrophobicity. This Beauveria bassiana (strain ARSEF 2860) (White muscardine disease fungus) protein is Class I hydrophobin C.